Here is a 293-residue protein sequence, read N- to C-terminus: 4-hydroxy-tetrahydrodipicolinate synthase (293 aa).

Residue Thr-45 coordinates pyruvate. Residue Tyr-133 is the Proton donor/acceptor of the active site. Lys-161 (schiff-base intermediate with substrate) is an active-site residue. Residue Ile-203 coordinates pyruvate.

The protein belongs to the DapA family. Homotetramer; dimer of dimers.

The protein localises to the cytoplasm. It carries out the reaction L-aspartate 4-semialdehyde + pyruvate = (2S,4S)-4-hydroxy-2,3,4,5-tetrahydrodipicolinate + H2O + H(+). The protein operates within amino-acid biosynthesis; L-lysine biosynthesis via DAP pathway; (S)-tetrahydrodipicolinate from L-aspartate: step 3/4. Its function is as follows. Catalyzes the condensation of (S)-aspartate-beta-semialdehyde [(S)-ASA] and pyruvate to 4-hydroxy-tetrahydrodipicolinate (HTPA). The protein is 4-hydroxy-tetrahydrodipicolinate synthase of Aliivibrio salmonicida (strain LFI1238) (Vibrio salmonicida (strain LFI1238)).